We begin with the raw amino-acid sequence, 396 residues long: Maltose/maltodextrin-binding periplasmic protein (396 aa).

A signal peptide spans 1–26 (MKIKTGVGILALSALTTMMISAPALA).

Belongs to the bacterial solute-binding protein 1 family. As to quaternary structure, the complex is composed of two ATP-binding proteins (MalK), two transmembrane proteins (MalG and MalF) and a solute-binding protein (MalE).

Its subcellular location is the periplasm. Functionally, part of the ABC transporter complex MalEFGK involved in maltose/maltodextrin import. Binds maltose and higher maltodextrins. The chain is Maltose/maltodextrin-binding periplasmic protein (malE) from Salmonella typhimurium (strain LT2 / SGSC1412 / ATCC 700720).